The chain runs to 296 residues: MDATKWTQGFQEMINVKPMEQMISSTNNNTPQQQPTFIATNTRPNATASNGGSGGNTNNTATMETRKARPQEKVNCPRCNSTNTKFCYYNNYSLTQPRYFCKGCRRYWTEGGSLRNVPVGGSSRKNKRSSTPLASPSNPKLPDLNPPILFSSQIPNKSNKDLNLLSFPVMQDHHHHALELLRSNGVSSRGMNTFLPGQMMDSNSVLYSSLGFPTMPDYKQSNNNLSFSIDHHQGIGHNTINSNQRAQDNNDDMNGASRVLFPFSDMKELSSTTQEKSHGNNTYWNGMFSNTGGSSW.

Positions 41–69 are disordered; it reads NTRPNATASNGGSGGNTNNTATMETRKAR. A compositionally biased stretch (low complexity) spans 45 to 62; the sequence is NATASNGGSGGNTNNTAT. A Dof-type zinc finger spans residues 74–128; that stretch reads VNCPRCNSTNTKFCYYNNYSLTQPRYFCKGCRRYWTEGGSLRNVPVGGSSRKNKR. Residues C76, C79, C101, and C104 each contribute to the Zn(2+) site. Positions 115-146 are disordered; that stretch reads RNVPVGGSSRKNKRSSTPLASPSNPKLPDLNP. Positions 129 to 138 are enriched in polar residues; the sequence is SSTPLASPSN.

As to expression, expressed in the phloem of the mother plant, including in roots, stem, leaves and flowers, but not present in the seed and embryo. In maturing siliques, found all through the funiculus connecting the placenta to the ovule, but not in the ovule.

The protein resides in the nucleus. Its function is as follows. Transcription factor specifically involved in the maternal control of seed germination. Regulates transcription by binding to a 5'-AA[AG]G-3' consensus core sequence. May ensure the inactivity of a component that would be activated to trigger germination as a consequence of red light perception. The sequence is that of Dof zinc finger protein DOF3.7 (DOF3.7) from Arabidopsis thaliana (Mouse-ear cress).